The chain runs to 437 residues: Protein farnesyltransferase subunit beta (437 aa).

PFTB repeat units follow at residues 123–164, 174–215, 222–263, 270–312, and 332–374; these read ATDV…CIIG, REKL…SLTN, FEGT…VILK, LKSL…PLLH, and QQAL…SIAQ. Residues 248-251 and 291-294 each bind (2E,6E)-farnesyl diphosphate; these read HGGY and RCNK. The Zn(2+) site is built by aspartate 297 and cysteine 299. A (2E,6E)-farnesyl diphosphate-binding site is contributed by 300 to 303; that stretch reads YSFW. A Zn(2+)-binding site is contributed by histidine 362. A Phosphothreonine modification is found at threonine 436.

The protein belongs to the protein prenyltransferase subunit beta family. As to quaternary structure, heterodimer of FNTA and FNTB. It depends on Zn(2+) as a cofactor.

The enzyme catalyses L-cysteinyl-[protein] + (2E,6E)-farnesyl diphosphate = S-(2E,6E)-farnesyl-L-cysteinyl-[protein] + diphosphate. In terms of biological role, essential subunit of the farnesyltransferase complex. Catalyzes the transfer of a farnesyl moiety from farnesyl diphosphate to a cysteine at the fourth position from the C-terminus of several proteins having the C-terminal sequence Cys-aliphatic-aliphatic-X. This Bos taurus (Bovine) protein is Protein farnesyltransferase subunit beta (FNTB).